Consider the following 314-residue polypeptide: DNA-directed RNA polymerase subunit alpha (314 aa).

Residues 1 to 228 (MIEIEKPKIE…EHLNIFVGLT (228 aa)) are alpha N-terminal domain (alpha-NTD). The alpha C-terminal domain (alpha-CTD) stretch occupies residues 245–314 (KEKVLEMTIE…ELGLSLRKDD (70 aa)).

It belongs to the RNA polymerase alpha chain family. In terms of assembly, homodimer. The RNAP catalytic core consists of 2 alpha, 1 beta, 1 beta' and 1 omega subunit. When a sigma factor is associated with the core the holoenzyme is formed, which can initiate transcription.

The catalysed reaction is RNA(n) + a ribonucleoside 5'-triphosphate = RNA(n+1) + diphosphate. DNA-dependent RNA polymerase catalyzes the transcription of DNA into RNA using the four ribonucleoside triphosphates as substrates. The chain is DNA-directed RNA polymerase subunit alpha from Geobacillus thermodenitrificans (strain NG80-2).